Consider the following 246-residue polypeptide: Uridylate kinase (246 aa).

20–23 (KISG) lines the ATP pocket. The interval 28 to 33 (GDQGYG) is involved in allosteric activation by GTP. Glycine 62 is a UMP binding site. Residues glycine 63 and arginine 67 each coordinate ATP. Residues aspartate 82 and 143–150 (TGNPYFTT) each bind UMP. The ATP site is built by threonine 170, tyrosine 176, and aspartate 179.

The protein belongs to the UMP kinase family. As to quaternary structure, homohexamer.

The protein resides in the cytoplasm. The catalysed reaction is UMP + ATP = UDP + ADP. The protein operates within pyrimidine metabolism; CTP biosynthesis via de novo pathway; UDP from UMP (UMPK route): step 1/1. Allosterically activated by GTP. Inhibited by UTP. In terms of biological role, catalyzes the reversible phosphorylation of UMP to UDP. This Cereibacter sphaeroides (strain ATCC 17029 / ATH 2.4.9) (Rhodobacter sphaeroides) protein is Uridylate kinase.